Reading from the N-terminus, the 327-residue chain is MPHLAELVAKAKAAVEDAQDIAALDLVRVEYLGKKGHLTLQMTSLRELPAEERPAAGAVINQAKQEVQEALNARKEKLESAVLNARLAAETIDVSLPGRRMENGGLHPVTRTIERIETFFGELGFSVESGPEIEDDYHNFDALNIPAHHPARADHDTFWFDATRLLRTQTSGVQIRTMQEQQPPIRIIVPGRVYRNDYDQTHTPMFHQMEGLIVDRDISFTNLKGTLHDFLRNFFEEDLQIRFRPSYFPFTEPSAEVDVMGKNGKWLEVLGCGMVHPNVLRNVGIDPEIYSGFAFGMGMERLTMLRYGVTDLRAFFENDLRFLKQFK.

Residue Glu-252 coordinates Mg(2+).

The protein belongs to the class-II aminoacyl-tRNA synthetase family. Phe-tRNA synthetase alpha subunit type 1 subfamily. In terms of assembly, tetramer of two alpha and two beta subunits. Mg(2+) serves as cofactor.

The protein localises to the cytoplasm. The catalysed reaction is tRNA(Phe) + L-phenylalanine + ATP = L-phenylalanyl-tRNA(Phe) + AMP + diphosphate + H(+). The chain is Phenylalanine--tRNA ligase alpha subunit from Yersinia pseudotuberculosis serotype O:1b (strain IP 31758).